Here is a 467-residue protein sequence, read N- to C-terminus: uncharacterized protein (467 aa).

The interval 416 to 467 is disordered; that stretch reads KQQRAQTAVVGTTKELVSKATHMKPPRTPPGEAEHRKRSQSLAICQWNKNSR. Residues 455-467 show a composition bias toward polar residues; it reads QSLAICQWNKNSR.

This is an uncharacterized protein from Homo sapiens (Human).